Consider the following 179-residue polypeptide: Optic atrophy 3 protein (179 aa).

Residues 103–163 (RHQAQQRHKE…TELQEVRAQL (61 aa)) adopt a coiled-coil conformation.

The protein belongs to the OPA3 family. Ubiquitous. Most prominent expression in skeletal muscle and kidney.

It localises to the mitochondrion. Its function is as follows. May play some role in mitochondrial processes. This Homo sapiens (Human) protein is Optic atrophy 3 protein (OPA3).